A 338-amino-acid chain; its full sequence is Cytochrome P450 monooxygenase easK (338 aa).

The first 16 residues, 1 to 16 (MLLLTFTLPVVTLLLA), serve as a signal peptide directing secretion. Residues N240 and N327 are each glycosylated (N-linked (GlcNAc...) asparagine).

It belongs to the cytochrome P450 family. The cofactor is heme.

It participates in alkaloid biosynthesis; ergot alkaloid biosynthesis. In terms of biological role, cytochrome P450 monooxygenase; part of the gene cluster that mediates the biosynthesis of fumiclavanine C, a fungal ergot alkaloid. DmaW catalyzes the first step of ergot alkaloid biosynthesis by condensing dimethylallyl diphosphate (DMAP) and tryptophan to form 4-dimethylallyl-L-tryptophan. The second step is catalyzed by the methyltransferase easF that methylates 4-dimethylallyl-L-tryptophan in the presence of S-adenosyl-L-methionine, resulting in the formation of 4-dimethylallyl-L-abrine. The catalase easC and the FAD-dependent oxidoreductase easE then transform 4-dimethylallyl-L-abrine to chanoclavine-I which is further oxidized by EasD in the presence of NAD(+), resulting in the formation of chanoclavine-I aldehyde. EasA reduces chanoclavine-I aldehyde to dihydrochanoclavine-I aldehyde that spontaneously dehydrates to form 6,8-dimethyl-6,7-didehydroergoline. EasG then catalyzes the reduction of 6,8-dimethyl-6,7-didehydroergoline to form festuclavine. Hydrolysis of festuclavine by easM then leads to the formation of fumigaclavine B which is in turn acetylated by easN to fumigaclavine A. Finally, easL catalyzes the conversion of fumigaclavine A into fumigaclavine C by attaching a dimethylallyl moiety to C-2 of the indole nucleus. The role of the cytochrome P450 monooxygenase easK within the cluster has not been identified yet. The chain is Cytochrome P450 monooxygenase easK from Aspergillus fumigatus (strain ATCC MYA-4609 / CBS 101355 / FGSC A1100 / Af293) (Neosartorya fumigata).